A 122-amino-acid chain; its full sequence is Large ribosomal subunit protein uL14c (122 aa).

The protein belongs to the universal ribosomal protein uL14 family. In terms of assembly, part of the 50S ribosomal subunit.

The protein localises to the plastid. The protein resides in the chloroplast. Functionally, binds to 23S rRNA. The protein is Large ribosomal subunit protein uL14c of Fagopyrum esculentum subsp. ancestrale (Wild buckwheat).